A 223-amino-acid chain; its full sequence is MKSAVVQLPGLNRDCDMIAALTKISGKAPVTVWQTETEIPDVDLIVIPGGFSYGDYLRCGAIAARMPVMQAIKAKAEQGVRVLGVCNGFQILVEAGLLPGALMRNASLKFVCREVKLEVVNADTAFTRAYAKGQVIRSPVAHHDGNYFADAETLKAIEGNGQVVFRYAEGTNPNGSVNDIAGVLNAKGNVLGMMPHPENLIESAHGGADGRGLFASALDVIAA.

Residues serine 3 to alanine 223 enclose the Glutamine amidotransferase type-1 domain. Residue cysteine 86 is the Nucleophile of the active site. Residues histidine 196 and glutamate 198 contribute to the active site.

In terms of assembly, part of the FGAM synthase complex composed of 1 PurL, 1 PurQ and 2 PurS subunits.

The protein resides in the cytoplasm. The catalysed reaction is N(2)-formyl-N(1)-(5-phospho-beta-D-ribosyl)glycinamide + L-glutamine + ATP + H2O = 2-formamido-N(1)-(5-O-phospho-beta-D-ribosyl)acetamidine + L-glutamate + ADP + phosphate + H(+). The enzyme catalyses L-glutamine + H2O = L-glutamate + NH4(+). The protein operates within purine metabolism; IMP biosynthesis via de novo pathway; 5-amino-1-(5-phospho-D-ribosyl)imidazole from N(2)-formyl-N(1)-(5-phospho-D-ribosyl)glycinamide: step 1/2. In terms of biological role, part of the phosphoribosylformylglycinamidine synthase complex involved in the purines biosynthetic pathway. Catalyzes the ATP-dependent conversion of formylglycinamide ribonucleotide (FGAR) and glutamine to yield formylglycinamidine ribonucleotide (FGAM) and glutamate. The FGAM synthase complex is composed of three subunits. PurQ produces an ammonia molecule by converting glutamine to glutamate. PurL transfers the ammonia molecule to FGAR to form FGAM in an ATP-dependent manner. PurS interacts with PurQ and PurL and is thought to assist in the transfer of the ammonia molecule from PurQ to PurL. This Rhizobium meliloti (strain 1021) (Ensifer meliloti) protein is Phosphoribosylformylglycinamidine synthase subunit PurQ.